Here is a 403-residue protein sequence, read N- to C-terminus: S-adenosylmethionine synthase (403 aa).

His22 contributes to the ATP binding site. Asp24 lines the Mg(2+) pocket. Residue Glu50 coordinates K(+). Residues Glu63 and Gln107 each coordinate L-methionine. The segment at 107–117 is flexible loop; it reads QSPDIAMGVDK. Residues 182 to 184, 248 to 249, Asp257, 263 to 264, Ala280, and Lys284 contribute to the ATP site; these read DAK, RF, and RK. Residue Asp257 coordinates L-methionine. Residue Lys288 coordinates L-methionine.

It belongs to the AdoMet synthase family. Homotetramer; dimer of dimers. Mg(2+) serves as cofactor. K(+) is required as a cofactor.

It localises to the cytoplasm. It carries out the reaction L-methionine + ATP + H2O = S-adenosyl-L-methionine + phosphate + diphosphate. The protein operates within amino-acid biosynthesis; S-adenosyl-L-methionine biosynthesis; S-adenosyl-L-methionine from L-methionine: step 1/1. Functionally, catalyzes the formation of S-adenosylmethionine (AdoMet) from methionine and ATP. The overall synthetic reaction is composed of two sequential steps, AdoMet formation and the subsequent tripolyphosphate hydrolysis which occurs prior to release of AdoMet from the enzyme. The sequence is that of S-adenosylmethionine synthase from Chloroflexus aurantiacus (strain ATCC 29366 / DSM 635 / J-10-fl).